A 314-amino-acid polypeptide reads, in one-letter code: Serine/threonine-protein phosphatase CPPED1 (314 aa).

Position 2 is a phosphoserine (Ser-2). Residues 47–250 are catalytic; the sequence is KAWSTGDCDN…KVVFSGHYHR (204 aa). The a divalent metal cation site is built by Asp-53, Asp-90, Asn-127, and His-247. Ser-294 bears the Phosphoserine mark.

Belongs to the metallophosphoesterase superfamily. CPPED1 family. A divalent metal cation serves as cofactor. In terms of tissue distribution, expressed in subcutaneous adipose tissue.

It localises to the cytoplasm. It catalyses the reaction O-phospho-L-seryl-[protein] + H2O = L-seryl-[protein] + phosphate. The catalysed reaction is O-phospho-L-threonyl-[protein] + H2O = L-threonyl-[protein] + phosphate. Its function is as follows. Protein phosphatase that dephosphorylates AKT family kinase specifically at 'Ser-473', blocking cell cycle progression and promoting cell apoptosis. May play an inhibitory role in glucose uptake by adipocytes. The protein is Serine/threonine-protein phosphatase CPPED1 (CPPED1) of Homo sapiens (Human).